Reading from the N-terminus, the 597-residue chain is Lipoprotein LpqB (597 aa).

Residues 1-28 form the signal peptide; the sequence is MTPGSRSAMRSRSVCGAIALAVLVTVSG. A lipid anchor (N-palmitoyl cysteine) is attached at cysteine 29. The S-diacylglycerol cysteine moiety is linked to residue cysteine 29. A compositionally biased stretch (polar residues) spans 39–51; the sequence is QAIGTINRDSPGS. The tract at residues 39 to 59 is disordered; sequence QAIGTINRDSPGSSVAAPAPG.

The protein belongs to the LpqB lipoprotein family.

The protein resides in the cell membrane. In Rhodococcus opacus (strain B4), this protein is Lipoprotein LpqB.